The sequence spans 211 residues: Bcl-2-related ovarian killer protein homolog B (211 aa).

Positions 32–44 match the BH4 motif; sequence KELCRDFIHSRIT. A BH3 motif is present at residues 67–83; the sequence is VSVVLLKLGDELECMRP. The BH1 motif lies at 113 to 132; sequence EVIAMGITWGKVVAIYAVAA. The short motif at 165-179 is the BH2 element; that stretch reads WLKKRGGWVDILKCV. A helical membrane pass occupies residues 190-210; the sequence is WLSTAVLTWREFIKTMYVYLT.

Belongs to the Bcl-2 family. As to expression, expressed strongly in ovary and more weakly in eye. Little expression in other tissues examined.

It is found in the membrane. Functionally, may play a role in apoptosis. Does not appear to show pro-apoptotic activity when expressed ectopically in early embryos. This chain is Bcl-2-related ovarian killer protein homolog B (bokb), found in Danio rerio (Zebrafish).